A 300-amino-acid polypeptide reads, in one-letter code: Acetyl-coenzyme A carboxylase carboxyl transferase subunit beta 2 (300 aa).

Residues valine 26–valine 294 enclose the CoA carboxyltransferase N-terminal domain. Zn(2+)-binding residues include cysteine 30, cysteine 33, cysteine 49, and cysteine 51. The C4-type zinc-finger motif lies at cysteine 30 to cysteine 51.

The protein belongs to the AccD/PCCB family. As to quaternary structure, acetyl-CoA carboxylase is a heterohexamer composed of biotin carboxyl carrier protein (AccB), biotin carboxylase (AccC) and two subunits each of ACCase subunit alpha (AccA) and ACCase subunit beta (AccD). The cofactor is Zn(2+).

It is found in the cytoplasm. The enzyme catalyses N(6)-carboxybiotinyl-L-lysyl-[protein] + acetyl-CoA = N(6)-biotinyl-L-lysyl-[protein] + malonyl-CoA. It participates in lipid metabolism; malonyl-CoA biosynthesis; malonyl-CoA from acetyl-CoA: step 1/1. Its function is as follows. Component of the acetyl coenzyme A carboxylase (ACC) complex. Biotin carboxylase (BC) catalyzes the carboxylation of biotin on its carrier protein (BCCP) and then the CO(2) group is transferred by the transcarboxylase to acetyl-CoA to form malonyl-CoA. In Roseiflexus sp. (strain RS-1), this protein is Acetyl-coenzyme A carboxylase carboxyl transferase subunit beta 2.